A 196-amino-acid polypeptide reads, in one-letter code: DnaA initiator-associating protein DiaA (196 aa).

In terms of domain architecture, SIS spans 34 to 196 (MVQSLLNGNK…DNTLFPHQDD (163 aa)).

The protein belongs to the SIS family. DiaA subfamily. In terms of assembly, homotetramer; dimer of dimers.

In terms of biological role, required for the timely initiation of chromosomal replication via direct interactions with the DnaA initiator protein. This chain is DnaA initiator-associating protein DiaA, found in Photorhabdus laumondii subsp. laumondii (strain DSM 15139 / CIP 105565 / TT01) (Photorhabdus luminescens subsp. laumondii).